A 182-amino-acid polypeptide reads, in one-letter code: Isopentenyl-diphosphate Delta-isomerase (182 aa).

Mn(2+)-binding residues include His23 and His30. One can recognise a Nudix hydrolase domain in the interval 28–162; it reads PRHLAFSCHV…PWAFSPWLVE (135 aa). Cys65 is an active-site residue. Cys65 contacts Mg(2+). His67 provides a ligand contact to Mn(2+). Mg(2+) is bound at residue Glu85. 2 residues coordinate Mn(2+): Glu112 and Glu114. The active site involves Glu114.

This sequence belongs to the IPP isomerase type 1 family. Requires Mg(2+) as cofactor. Mn(2+) is required as a cofactor.

It localises to the cytoplasm. It catalyses the reaction isopentenyl diphosphate = dimethylallyl diphosphate. It functions in the pathway isoprenoid biosynthesis; dimethylallyl diphosphate biosynthesis; dimethylallyl diphosphate from isopentenyl diphosphate: step 1/1. Catalyzes the 1,3-allylic rearrangement of the homoallylic substrate isopentenyl (IPP) to its highly electrophilic allylic isomer, dimethylallyl diphosphate (DMAPP). The chain is Isopentenyl-diphosphate Delta-isomerase from Brevibacterium linens.